We begin with the raw amino-acid sequence, 108 residues long: Nucleoid-associated protein BH02310 (108 aa).

The protein belongs to the YbaB/EbfC family. As to quaternary structure, homodimer.

The protein localises to the cytoplasm. The protein resides in the nucleoid. In terms of biological role, binds to DNA and alters its conformation. May be involved in regulation of gene expression, nucleoid organization and DNA protection. The protein is Nucleoid-associated protein BH02310 of Bartonella henselae (strain ATCC 49882 / DSM 28221 / CCUG 30454 / Houston 1) (Rochalimaea henselae).